The sequence spans 517 residues: Bifunctional purine biosynthesis protein PurH (517 aa).

An MGS-like domain is found at 1 to 146; the sequence is MAPIALLSVS…KNHAHVAVLT (146 aa).

This sequence belongs to the PurH family.

It carries out the reaction (6R)-10-formyltetrahydrofolate + 5-amino-1-(5-phospho-beta-D-ribosyl)imidazole-4-carboxamide = 5-formamido-1-(5-phospho-D-ribosyl)imidazole-4-carboxamide + (6S)-5,6,7,8-tetrahydrofolate. The enzyme catalyses IMP + H2O = 5-formamido-1-(5-phospho-D-ribosyl)imidazole-4-carboxamide. The protein operates within purine metabolism; IMP biosynthesis via de novo pathway; 5-formamido-1-(5-phospho-D-ribosyl)imidazole-4-carboxamide from 5-amino-1-(5-phospho-D-ribosyl)imidazole-4-carboxamide (10-formyl THF route): step 1/1. It functions in the pathway purine metabolism; IMP biosynthesis via de novo pathway; IMP from 5-formamido-1-(5-phospho-D-ribosyl)imidazole-4-carboxamide: step 1/1. This Prochlorococcus marinus (strain MIT 9303) protein is Bifunctional purine biosynthesis protein PurH.